Consider the following 678-residue polypeptide: UvrABC system protein B (678 aa).

In terms of domain architecture, Helicase ATP-binding spans 31 to 417; that stretch reads ENLNDGLAHQ…KSGTEIIDQV (387 aa). 44–51 lines the ATP pocket; it reads GVTGSGKT. The Beta-hairpin signature appears at 97 to 120; sequence YYDYYQPEAYVPSSDTFIEKDASI. In terms of domain architecture, Helicase C-terminal spans 436 to 602; the sequence is QVDDLLSEAR…GLNKKVGELL (167 aa). The interval 603-625 is disordered; sequence DIGQGGSNKSRNKPRSQKAAEPA. The UVR domain maps to 638–673; sequence QQQIKKLEQQMYKFAQDLEFEKAAAIRDQLHKLREQ.

It belongs to the UvrB family. As to quaternary structure, forms a heterotetramer with UvrA during the search for lesions. Interacts with UvrC in an incision complex.

Its subcellular location is the cytoplasm. In terms of biological role, the UvrABC repair system catalyzes the recognition and processing of DNA lesions. A damage recognition complex composed of 2 UvrA and 2 UvrB subunits scans DNA for abnormalities. Upon binding of the UvrA(2)B(2) complex to a putative damaged site, the DNA wraps around one UvrB monomer. DNA wrap is dependent on ATP binding by UvrB and probably causes local melting of the DNA helix, facilitating insertion of UvrB beta-hairpin between the DNA strands. Then UvrB probes one DNA strand for the presence of a lesion. If a lesion is found the UvrA subunits dissociate and the UvrB-DNA preincision complex is formed. This complex is subsequently bound by UvrC and the second UvrB is released. If no lesion is found, the DNA wraps around the other UvrB subunit that will check the other stand for damage. The protein is UvrABC system protein B of Mannheimia succiniciproducens (strain KCTC 0769BP / MBEL55E).